A 376-amino-acid polypeptide reads, in one-letter code: Carboxylic ester hydrolase LipN (376 aa).

Catalysis depends on residues serine 216, aspartate 316, and histidine 346.

The protein belongs to the 'GDXG' lipolytic enzyme family.

The protein resides in the cytoplasm. It carries out the reaction a carboxylic ester + H2O = an alcohol + a carboxylate + H(+). The enzyme catalyses an acetyl ester + H2O = an aliphatic alcohol + acetate + H(+). The catalysed reaction is a butanoate ester + H2O = an aliphatic alcohol + butanoate + H(+). It catalyses the reaction an octanoate ester + H2O = an aliphatic alcohol + octanoate + H(+). It carries out the reaction decanoate ester + H2O = decanoate + an aliphatic alcohol + H(+). The enzyme catalyses a dodecanoate ester + H2O = an aliphatic alcohol + dodecanoate + H(+). The catalysed reaction is 1,2,3-tributanoylglycerol + H2O = dibutanoylglycerol + butanoate + H(+). It catalyses the reaction 4-acetoxyphenol + H2O = hydroquinone + acetate + H(+). With respect to regulation, completely inhibited by tetrahydrolipstatin (THL), RHC-80267 and N-bromosuccinimide. Non specific carboxylic ester hydrolase. Hydrolyzes various pNP-esters, with a preference for short carbon chain substrates. Can also hydrolyze tributyrin to di- and monobutyrin and 4-hydroxyphenylacetate to hydroquinone. In Mycobacterium tuberculosis (strain ATCC 25618 / H37Rv), this protein is Carboxylic ester hydrolase LipN.